The sequence spans 312 residues: Olfactory receptor 7D2 (312 aa).

The Extracellular portion of the chain corresponds to M1–P25. An N-linked (GlcNAc...) asparagine glycan is attached at N5. Residues F26–I46 form a helical membrane-spanning segment. Over L47–H54 the chain is Cytoplasmic. Residues L55 to T75 traverse the membrane as a helical segment. At C76–T99 the chain is on the extracellular side. C97 and C189 are disulfide-bonded. The helical transmembrane segment at Q100–Y120 threads the bilayer. Over D121–H139 the chain is Cytoplasmic. The helical transmembrane segment at L140–I160 threads the bilayer. Over S161–T197 the chain is Extracellular. A helical membrane pass occupies residues L198–S217. The Cytoplasmic portion of the chain corresponds to Y218–A237. The chain crosses the membrane as a helical span at residues L238–V258. At H259–I271 the chain is on the extracellular side. Residues S272 to L292 traverse the membrane as a helical segment. Topologically, residues R293 to L312 are cytoplasmic.

The protein belongs to the G-protein coupled receptor 1 family.

It is found in the cell membrane. Odorant receptor. The protein is Olfactory receptor 7D2 (OR7D2) of Homo sapiens (Human).